Here is a 405-residue protein sequence, read N- to C-terminus: Phosphoglycerate kinase (405 aa).

Substrate is bound by residues 21–23 (DFN), R38, 59–62 (HQSR), R116, and R156. ATP contacts are provided by residues E330 and 355-358 (GGHT).

The protein belongs to the phosphoglycerate kinase family. In terms of assembly, monomer.

It is found in the cytoplasm. It catalyses the reaction (2R)-3-phosphoglycerate + ATP = (2R)-3-phospho-glyceroyl phosphate + ADP. Its pathway is carbohydrate degradation; glycolysis; pyruvate from D-glyceraldehyde 3-phosphate: step 2/5. This is Phosphoglycerate kinase from Methanocorpusculum labreanum (strain ATCC 43576 / DSM 4855 / Z).